The following is a 140-amino-acid chain: Holo-[acyl-carrier-protein] synthase (140 aa).

2 residues coordinate Mg(2+): Asp-8 and Glu-62.

This sequence belongs to the P-Pant transferase superfamily. AcpS family. Requires Mg(2+) as cofactor.

It localises to the cytoplasm. It carries out the reaction apo-[ACP] + CoA = holo-[ACP] + adenosine 3',5'-bisphosphate + H(+). Its function is as follows. Transfers the 4'-phosphopantetheine moiety from coenzyme A to a Ser of acyl-carrier-protein. This Cupriavidus necator (strain ATCC 17699 / DSM 428 / KCTC 22496 / NCIMB 10442 / H16 / Stanier 337) (Ralstonia eutropha) protein is Holo-[acyl-carrier-protein] synthase.